The following is a 493-amino-acid chain: MKASIYLVTVFILLLLLLPTAIPHDYSDALRKSILFFEGQRSGRLPKQQRMAWRRNSALNDGKNLKTDLVGGYYDAGDNVKFHFPMAFTATMLAWSSVDFGRYMSQHDFRHNLVAVKWATDYLLKTVSQLPNRIFVHVGEVQPDHDCWERPEDMDTPRTAFALDAPYPASDLAGEIAAALAAASIAFKQANPKYSAILLNKAVQTFQYADSHRGSYTDNPGIKQAVCPFYCSVNGYKDELLWGAAWLRRATGEDSYLRYLVDNGQAFGESSNYFEFGWDNKVGGVNVLVAKEVLQNNVTAIAAYKDTAEKMMCSFLPETNGPHMSYTPGGLIYKPGSTQLQNTAALSFLLLTYADYLSTSSQQLNCGNLKFQPDSLRRIVKRQVDYVLGDNPMKLSYMIGYGERYPGLIHHRGSSIPSVTVHPAAFGCIAGWNIFSSPNPNPNILIGAVIGGPDVDDRFIGGRTNASETEPTTYINAPFVGVFAYFKSNPNFS.

The first 23 residues, 1–23 (MKASIYLVTVFILLLLLLPTAIP), serve as a signal peptide directing secretion. Catalysis depends on Asp-78, which acts as the Nucleophile. Asn-297 is a glycosylation site (N-linked (GlcNAc...) asparagine). His-410 is a catalytic residue. The N-linked (GlcNAc...) asparagine glycan is linked to Asn-465. Glu-470 is an active-site residue.

The protein belongs to the glycosyl hydrolase 9 (cellulase E) family.

The protein localises to the secreted. The enzyme catalyses Endohydrolysis of (1-&gt;4)-beta-D-glucosidic linkages in cellulose, lichenin and cereal beta-D-glucans.. The sequence is that of Endoglucanase 23 from Arabidopsis thaliana (Mouse-ear cress).